The sequence spans 287 residues: Large ribosomal subunit protein uL2 (287 aa).

Positions 221–287 (RGSVMNPCDH…SKRSRGGRDS (67 aa)) are disordered. The span at 258 to 287 (KTRKKNKPSNKLVVRRRRRISKRSRGGRDS) shows a compositional bias: basic residues.

Belongs to the universal ribosomal protein uL2 family. As to quaternary structure, part of the 50S ribosomal subunit. Forms a bridge to the 30S subunit in the 70S ribosome.

One of the primary rRNA binding proteins. Required for association of the 30S and 50S subunits to form the 70S ribosome, for tRNA binding and peptide bond formation. It has been suggested to have peptidyltransferase activity; this is somewhat controversial. Makes several contacts with the 16S rRNA in the 70S ribosome. In Prochlorococcus marinus (strain MIT 9312), this protein is Large ribosomal subunit protein uL2.